The primary structure comprises 343 residues: Protein RecA (343 aa).

64 to 71 is a binding site for ATP; the sequence is GPESSGKT.

This sequence belongs to the RecA family.

The protein localises to the cytoplasm. Functionally, can catalyze the hydrolysis of ATP in the presence of single-stranded DNA, the ATP-dependent uptake of single-stranded DNA by duplex DNA, and the ATP-dependent hybridization of homologous single-stranded DNAs. It interacts with LexA causing its activation and leading to its autocatalytic cleavage. This chain is Protein RecA, found in Cereibacter sphaeroides (strain ATCC 17023 / DSM 158 / JCM 6121 / CCUG 31486 / LMG 2827 / NBRC 12203 / NCIMB 8253 / ATH 2.4.1.) (Rhodobacter sphaeroides).